The chain runs to 153 residues: MASPDPPATSYAPSDVPSGVALFLTIPFAFFLPELIFGFLVWTMVAATHIVYPLLQGWVMYVSLTSFLISLMFLLSYLFGFYKRFESWRVLDSLYHGTTGILYMSAAVLQVHATIVSEKLLDPRIYYINSAASFFAFIATLLYILHAFSIYYH.

The next 4 membrane-spanning stretches (helical) occupy residues 22–42 (LFLT…FLVW), 59–79 (VMYV…SYLF), 97–117 (GTTG…TIVS), and 131–151 (AASF…FSIY). The MARVEL domain maps to 22 to 153 (LFLTIPFAFF…ILHAFSIYYH (132 aa)).

The protein belongs to the MAL family.

Its subcellular location is the membrane. In Homo sapiens (Human), this protein is MAL-like protein (MALL).